We begin with the raw amino-acid sequence, 507 residues long: LRDEEQTAESIKNQMTVKEWEKVFEMSQDQNLYHNLCTSLFPTIHGNDEVKRGVLLMLFGGVPKTTGEGTSLRGDINVCIVGDPSTAKSQFLKHVDEFSPRAVYTSGKASSASGLTAAVVRDEESHEFVIEAGALMLADNGVCCIDEFDKMDMRDQVAIHEAMEQQTISITKAGVKATLNARTSILAAANPVSGHYDRSKSLKQNINLSAPIMSRFDLFFILVDECNEVTDYAIARRIVDLHSRIEESIDRVYSLDDIRRYLLFARQFKPKISKESEDFIVEQYKRLRQRDGSGITKSSWRITVRQLESMIRLSESMARMHCCDEVQPKHVKEAFRLLNKSIIRVETPDVNLDQEEEIQMETDEGPGGINGHADSPAPVNGFNGSGEDASQETVPKPSLRLAFAEYCRISNLIVLHLRKMEEEEDESALKRSELVNWYLKEIESEIDSEEELINKKRIIEKVVHRLTHYDHVLIELTQAGLKGSSEGSESYEEDPYLVVNPNYLLED.

Residues 32 to 239 (LYHNLCTSLF…TDYAIARRIV (208 aa)) enclose the MCM domain. Residues histidine 45, serine 85, threonine 86, alanine 87, lysine 88, serine 89, and asparagine 190 each contribute to the ATP site. Residues 214-217 (SRFD) carry the Arginine finger motif. ADP is bound by residues arginine 305 and glutamate 308. Residue lysine 329 is modified to N6-acetyllysine. Residues 365 to 392 (GPGGINGHADSPAPVNGFNGSGEDASQE) form a disordered region. Phosphoserine occurs at positions 375, 390, and 448. A Phosphothreonine modification is found at threonine 477.

This sequence belongs to the MCM family. As to quaternary structure, component of the MCM2-7 complex. The complex forms a toroidal hexameric ring with the proposed subunit order MCM2-MCM6-MCM4-MCM7-MCM3-MCM5. Component of the CMG helicase complex, a hexameric ring of related MCM2-7 subunits stabilized by CDC45 and the tetrameric GINS complex. May interact with MCM10. Interacts with TIPIN. Interacts with CDT1. Interacts with MCMBP. Interacts with DDI2. Post-translationally, O-glycosylated (O-GlcNAcylated), in a cell cycle-dependent manner.

It localises to the nucleus. It is found in the chromosome. The enzyme catalyses ATP + H2O = ADP + phosphate + H(+). Functionally, acts as a component of the MCM2-7 complex (MCM complex) which is the replicative helicase essential for 'once per cell cycle' DNA replication initiation and elongation in eukaryotic cells. Core component of CDC45-MCM-GINS (CMG) helicase, the molecular machine that unwinds template DNA during replication, and around which the replisome is built. The active ATPase sites in the MCM2-7 ring are formed through the interaction surfaces of two neighboring subunits such that a critical structure of a conserved arginine finger motif is provided in trans relative to the ATP-binding site of the Walker A box of the adjacent subunit. The six ATPase active sites, however, are likely to contribute differentially to the complex helicase activity. This Rattus norvegicus (Rat) protein is DNA replication licensing factor MCM6 (Mcm6).